A 557-amino-acid polypeptide reads, in one-letter code: Formate--tetrahydrofolate ligase 2 (557 aa).

66–73 contributes to the ATP binding site; that stretch reads TPAGEGKT.

The protein belongs to the formate--tetrahydrofolate ligase family.

It carries out the reaction (6S)-5,6,7,8-tetrahydrofolate + formate + ATP = (6R)-10-formyltetrahydrofolate + ADP + phosphate. The protein operates within one-carbon metabolism; tetrahydrofolate interconversion. In Streptococcus pyogenes serotype M5 (strain Manfredo), this protein is Formate--tetrahydrofolate ligase 2.